Reading from the N-terminus, the 120-residue chain is Large ribosomal subunit protein uL18 (120 aa).

The protein belongs to the universal ribosomal protein uL18 family. Part of the 50S ribosomal subunit; part of the 5S rRNA/L5/L18/L25 subcomplex. Contacts the 5S and 23S rRNAs.

Functionally, this is one of the proteins that bind and probably mediate the attachment of the 5S RNA into the large ribosomal subunit, where it forms part of the central protuberance. This Rippkaea orientalis (strain PCC 8801 / RF-1) (Cyanothece sp. (strain PCC 8801)) protein is Large ribosomal subunit protein uL18.